The sequence spans 609 residues: Zinc metalloproteinase-disintegrin-like (609 aa).

The N-terminal stretch at 1-20 (MIQVLLVTICLAALPYQGSS) is a signal peptide. The propeptide occupies 21 to 189 (IILESGNVND…KKASQLVVTA (169 aa)). The Peptidase M12B domain occupies 198–393 (RFVELVLVVD…QNPECIVNEP (196 aa)). Residues E201 and D285 each contribute to the Ca(2+) site. Cystine bridges form between C308–C388, C348–C372, and C350–C355. H333 provides a ligand contact to Zn(2+). E334 is a catalytic residue. Zn(2+) contacts are provided by H337 and H343. N-linked (GlcNAc...) asparagine glycosylation is present at N371. Ca(2+) contacts are provided by C388, N391, V403, N406, L408, E410, E413, and D416. In terms of domain architecture, Disintegrin spans 401–487 (PPVCGNELLE…ECPADVFHKN (87 aa)). 14 cysteine pairs are disulfide-bonded: C404–C433, C415–C428, C417–C423, C427–C450, C441–C447, C446–C472, C459–C479, C466–C498, C491–C503, C510–C560, C525–C571, C538–C548, C555–C597, and C591–C602. The short motif at 465–467 (ECD) is the D/ECD-tripeptide element. Ca(2+) is bound by residues D467, P468, E470, D482, and V483.

It belongs to the venom metalloproteinase (M12B) family. P-III subfamily. P-IIIa sub-subfamily. Monomer. The cofactor is Zn(2+). As to expression, expressed by the venom gland.

The protein localises to the secreted. This protein is a zinc metalloprotease from snake venom that possesses hemorrhagic activity. This Crotalus durissus durissus (Central American rattlesnake) protein is Zinc metalloproteinase-disintegrin-like.